Reading from the N-terminus, the 334-residue chain is Anthranilate phosphoribosyltransferase (334 aa).

Residues G79, 82–83 (GD), S87, 89–92 (NIST), 107–115 (KHGNRSISS), and S119 each bind 5-phospho-alpha-D-ribose 1-diphosphate. G79 contributes to the anthranilate binding site. S91 contributes to the Mg(2+) binding site. N110 lines the anthranilate pocket. Residue R165 participates in anthranilate binding. The Mg(2+) site is built by D224 and E225.

This sequence belongs to the anthranilate phosphoribosyltransferase family. In terms of assembly, homodimer. It depends on Mg(2+) as a cofactor.

It catalyses the reaction N-(5-phospho-beta-D-ribosyl)anthranilate + diphosphate = 5-phospho-alpha-D-ribose 1-diphosphate + anthranilate. Its pathway is amino-acid biosynthesis; L-tryptophan biosynthesis; L-tryptophan from chorismate: step 2/5. Functionally, catalyzes the transfer of the phosphoribosyl group of 5-phosphorylribose-1-pyrophosphate (PRPP) to anthranilate to yield N-(5'-phosphoribosyl)-anthranilate (PRA). This is Anthranilate phosphoribosyltransferase from Streptococcus gordonii (strain Challis / ATCC 35105 / BCRC 15272 / CH1 / DL1 / V288).